Reading from the N-terminus, the 271-residue chain is Gasdermin bGSDM (271 aa).

Cysteine 7 carries the S-palmitoyl cysteine lipid modification. Transmembrane regions (beta stranded) follow at residues 74-90 (IAGT…GLSV), 102-120 (TLGV…FEFS), 168-185 (RINV…GLNL), and 194-210 (ANVK…TVSF).

Belongs to the bacterial gasdermin family. As to quaternary structure, monomer. Forms large, homooligomeric ring-shaped pores when inserted in membranes. Post-translationally, palmitoylation helps stabilize the inactive state; may self palmitoylate. Palmitoylation plays a significant role in pore formation.

The protein resides in the cytoplasm. Its subcellular location is the cell inner membrane. The full-length protein before cleavage is inactive: intramolecular interactions between the N-terminal domain and the C-terminal region as well as the lipid modification, mediate autoinhibition. The pyroptosis-like-inducing activity is carried by the released N-terminal domain (Gasdermin bGSDM, N-terminus). Functionally, involved in defense against bacteriophages. When this probable 4 gene operon (bGSDM-FE772_23060-FE772_23065-FE772_23070) is inserted into E.coli it provides nearly 100-fold protection against phages T5 and T6 and about 8-fold against phage T4. The operon without bGSDM no longer protects against phage. Cleavage of this precursor by its dedicated protease(s) releases the active moiety (gasdermin bGSDM, N-terminus) which inserts into membranes, forming pores and triggering cell death. In terms of biological role, pore-forming protein that causes membrane permeabilization via a pyroptosis-like activity. Makes ring-like pores when released. This is Gasdermin bGSDM from Lysobacter enzymogenes.